Consider the following 194-residue polypeptide: CASP-like protein 4D1 (194 aa).

The Cytoplasmic portion of the chain corresponds to 1-10 (MASRTVLLPS). The chain crosses the membrane as a helical span at residues 11–31 (AVLILRLLSLGLLAASLALIA). The Extracellular segment spans residues 32-55 (ADKLNVDSDPPQRYTFRDVYAYRY). Residues 56 to 76 (VLAVAVIGCAYTLLQLPLAAV) traverse the membrane as a helical segment. The Cytoplasmic portion of the chain corresponds to 77 to 94 (SIIASGNNKRGIGAGGGS). The chain crosses the membrane as a helical span at residues 95 to 115 (VAVALLVLVLLADVVFALLLA). The Extracellular segment spans residues 116–161 (TGAAAGFAFTYDVKRYLDGQFDDDSIGTPEVDKLHRDMDKFFDLAY). A helical transmembrane segment spans residues 162 to 182 (AAAGLMLAAAACMALVIMLSV). Topologically, residues 183-194 (YSLARQVRSDYI) are cytoplasmic.

It belongs to the Casparian strip membrane proteins (CASP) family. As to quaternary structure, homodimer and heterodimers.

The protein resides in the cell membrane. In Sorghum bicolor (Sorghum), this protein is CASP-like protein 4D1.